Here is a 333-residue protein sequence, read N- to C-terminus: MNIAAKPPLTIRLCGPRGFCAGVDRAIQIVVLALKSYGAPVYVRHEIVHNRYVVEGLEAKGAVFVEELDEIPAEHRAQPVVFSAHGVPKSVPEDAASRNLFYLDATCPLVSKVHKQAMRHNRLGRHVVLIGHAGHPEVIGTMGQLPEGSVSLIETIEDADAYVPVDPDNLGYVTQTTLSVDDTAGVITRLHERFPNLTAPAADSICYATTNRQEVVKQAAPGCDLFIIVGAPNSSNSKRLVEVALRAGAKKSILVQRAAELDWDEIGAISTLGLSAGASAPEVIVNEIIEAFRARFDARVELAETVQETENFLVNRELRNIELTAADMAFVNG.

C20 serves as a coordination point for [4Fe-4S] cluster. The (2E)-4-hydroxy-3-methylbut-2-enyl diphosphate site is built by H49 and H85. Dimethylallyl diphosphate-binding residues include H49 and H85. The isopentenyl diphosphate site is built by H49 and H85. C107 is a binding site for [4Fe-4S] cluster. Residue H135 participates in (2E)-4-hydroxy-3-methylbut-2-enyl diphosphate binding. H135 is a binding site for dimethylallyl diphosphate. H135 contributes to the isopentenyl diphosphate binding site. E137 functions as the Proton donor in the catalytic mechanism. (2E)-4-hydroxy-3-methylbut-2-enyl diphosphate is bound at residue T176. Position 206 (C206) interacts with [4Fe-4S] cluster. Residues S234, S235, N236, and S279 each contribute to the (2E)-4-hydroxy-3-methylbut-2-enyl diphosphate site. The dimethylallyl diphosphate site is built by S234, S235, N236, and S279. Residues S234, S235, N236, and S279 each contribute to the isopentenyl diphosphate site.

This sequence belongs to the IspH family. It depends on [4Fe-4S] cluster as a cofactor.

It catalyses the reaction isopentenyl diphosphate + 2 oxidized [2Fe-2S]-[ferredoxin] + H2O = (2E)-4-hydroxy-3-methylbut-2-enyl diphosphate + 2 reduced [2Fe-2S]-[ferredoxin] + 2 H(+). The catalysed reaction is dimethylallyl diphosphate + 2 oxidized [2Fe-2S]-[ferredoxin] + H2O = (2E)-4-hydroxy-3-methylbut-2-enyl diphosphate + 2 reduced [2Fe-2S]-[ferredoxin] + 2 H(+). It participates in isoprenoid biosynthesis; dimethylallyl diphosphate biosynthesis; dimethylallyl diphosphate from (2E)-4-hydroxy-3-methylbutenyl diphosphate: step 1/1. The protein operates within isoprenoid biosynthesis; isopentenyl diphosphate biosynthesis via DXP pathway; isopentenyl diphosphate from 1-deoxy-D-xylulose 5-phosphate: step 6/6. In terms of biological role, catalyzes the conversion of 1-hydroxy-2-methyl-2-(E)-butenyl 4-diphosphate (HMBPP) into a mixture of isopentenyl diphosphate (IPP) and dimethylallyl diphosphate (DMAPP). Acts in the terminal step of the DOXP/MEP pathway for isoprenoid precursor biosynthesis. This Rhizobium johnstonii (strain DSM 114642 / LMG 32736 / 3841) (Rhizobium leguminosarum bv. viciae) protein is 4-hydroxy-3-methylbut-2-enyl diphosphate reductase.